The following is a 645-amino-acid chain: Macrolide export ATP-binding/permease protein MacB (645 aa).

Residues 6-244 form the ABC transporter domain; the sequence is IELKDVTRYY…EAPQYRYARK (239 aa). 42-49 contributes to the ATP binding site; it reads GQSGSGKS. A run of 4 helical transmembrane segments spans residues 271-291, 520-540, 577-597, and 608-628; these read ALTLLGVVIGVSAVVAMLAIG, FSILLGSVAAISLLVGGIGVM, VVGGLGGIAGVAIGFGIVFII, and PLPAILAFSSALGTGLVFGLL.

Belongs to the ABC transporter superfamily. Macrolide exporter (TC 3.A.1.122) family. As to quaternary structure, homodimer.

It is found in the cell inner membrane. Non-canonical ABC transporter that contains transmembrane domains (TMD), which form a pore in the inner membrane, and an ATP-binding domain (NBD), which is responsible for energy generation. Confers resistance against macrolides. The polypeptide is Macrolide export ATP-binding/permease protein MacB (Hyphomonas neptunium (strain ATCC 15444)).